We begin with the raw amino-acid sequence, 261 residues long: Thiazole synthase (261 aa).

Catalysis depends on Lys-97, which acts as the Schiff-base intermediate with DXP. Residues Gly-158, 184–185 (AG), and 206–207 (AS) each bind 1-deoxy-D-xylulose 5-phosphate.

Belongs to the ThiG family. Homotetramer. Forms heterodimers with either ThiH or ThiS.

It is found in the cytoplasm. The enzyme catalyses [ThiS sulfur-carrier protein]-C-terminal-Gly-aminoethanethioate + 2-iminoacetate + 1-deoxy-D-xylulose 5-phosphate = [ThiS sulfur-carrier protein]-C-terminal Gly-Gly + 2-[(2R,5Z)-2-carboxy-4-methylthiazol-5(2H)-ylidene]ethyl phosphate + 2 H2O + H(+). It participates in cofactor biosynthesis; thiamine diphosphate biosynthesis. Its function is as follows. Catalyzes the rearrangement of 1-deoxy-D-xylulose 5-phosphate (DXP) to produce the thiazole phosphate moiety of thiamine. Sulfur is provided by the thiocarboxylate moiety of the carrier protein ThiS. In vitro, sulfur can be provided by H(2)S. The protein is Thiazole synthase of Corynebacterium diphtheriae (strain ATCC 700971 / NCTC 13129 / Biotype gravis).